The chain runs to 365 residues: Chorismate synthase (365 aa).

Residues R48 and R54 each contribute to the NADP(+) site. Residues 131–133 (RSS), 243–244 (NA), G288, 303–307 (KPTSS), and R329 each bind FMN.

The protein belongs to the chorismate synthase family. In terms of assembly, homotetramer. FMNH2 is required as a cofactor.

The catalysed reaction is 5-O-(1-carboxyvinyl)-3-phosphoshikimate = chorismate + phosphate. It participates in metabolic intermediate biosynthesis; chorismate biosynthesis; chorismate from D-erythrose 4-phosphate and phosphoenolpyruvate: step 7/7. Functionally, catalyzes the anti-1,4-elimination of the C-3 phosphate and the C-6 proR hydrogen from 5-enolpyruvylshikimate-3-phosphate (EPSP) to yield chorismate, which is the branch point compound that serves as the starting substrate for the three terminal pathways of aromatic amino acid biosynthesis. This reaction introduces a second double bond into the aromatic ring system. This Rhizobium leguminosarum bv. trifolii (strain WSM2304) protein is Chorismate synthase.